We begin with the raw amino-acid sequence, 179 residues long: Large ribosomal subunit protein uL5c (179 aa).

Belongs to the universal ribosomal protein uL5 family. As to quaternary structure, part of the 50S ribosomal subunit; contacts the 5S rRNA.

The protein localises to the plastid. Its subcellular location is the organellar chromatophore. Binds 5S rRNA, forms part of the central protuberance of the 50S subunit. In Paulinella chromatophora, this protein is Large ribosomal subunit protein uL5c (rpl5).